Here is a 304-residue protein sequence, read N- to C-terminus: Methionyl-tRNA formyltransferase (304 aa).

110–113 (SLLP) contributes to the (6S)-5,6,7,8-tetrahydrofolate binding site.

The protein belongs to the Fmt family.

The catalysed reaction is L-methionyl-tRNA(fMet) + (6R)-10-formyltetrahydrofolate = N-formyl-L-methionyl-tRNA(fMet) + (6S)-5,6,7,8-tetrahydrofolate + H(+). In terms of biological role, attaches a formyl group to the free amino group of methionyl-tRNA(fMet). The formyl group appears to play a dual role in the initiator identity of N-formylmethionyl-tRNA by promoting its recognition by IF2 and preventing the misappropriation of this tRNA by the elongation apparatus. In Sulfurovum sp. (strain NBC37-1), this protein is Methionyl-tRNA formyltransferase.